The sequence spans 423 residues: Glycine amidinotransferase, mitochondrial (423 aa).

The N-terminal 48 residues, 1–48 (MLRVRCLRGGSRGAEAVHYIGSRLGRTLTGWVQRTFQSTQAATASSRN), are a transit peptide targeting the mitochondrion. The segment covering 39-51 (TQAATASSRNSSA) has biased composition (low complexity). The disordered stretch occupies residues 39–65 (TQAATASSRNSSAADDKATEPLPKDCP). A phosphoserine mark is found at Ser-46 and Ser-49. Basic and acidic residues predominate over residues 52–61 (ADDKATEPLP). Asp-170 serves as a coordination point for arginine. Active-site residues include Asp-254 and His-303. Arginine-binding residues include Asp-305, Arg-322, Ser-354, and Ser-355. Lys-385 is modified (N6-acetyllysine). The Amidino-cysteine intermediate role is filled by Cys-407.

This sequence belongs to the amidinotransferase family. In terms of assembly, homodimer.

Its subcellular location is the mitochondrion inner membrane. It carries out the reaction L-arginine + glycine = guanidinoacetate + L-ornithine. It catalyses the reaction 4-aminobutanoate + L-arginine = 4-guanidinobutanoate + L-ornithine. The catalysed reaction is beta-alanine + L-arginine = 3-guanidinopropanoate + L-ornithine. The enzyme catalyses taurine + L-arginine = taurocyamine + L-ornithine. It participates in amine and polyamine biosynthesis; creatine biosynthesis; creatine from L-arginine and glycine: step 1/2. In terms of biological role, transamidinase that catalyzes the transfer of the amidino group of L-arginine onto the amino moiety of acceptor metabolites such as glycine, beta-alanine, gamma-aminobutyric acid (GABA) and taurine yielding the corresponding guanidine derivatives. Catalyzes the rate-limiting step of creatine biosynthesis, namely the transfer of the amidino group from L-arginine to glycine to generate guanidinoacetate, which is then methylated by GAMT to form creatine. Provides creatine as a source for ATP generation in tissues with high energy demands, in particular skeletal muscle, heart and brain. The protein is Glycine amidinotransferase, mitochondrial (GATM) of Pongo abelii (Sumatran orangutan).